We begin with the raw amino-acid sequence, 306 residues long: ADP,ATP carrier protein ER-ANT1 (306 aa).

Solcar repeat units follow at residues Glu8–Leu101, Lys113–Ile205, and Gly213–Ile299. 5 helical membrane-spanning segments follow: residues Phe10–Leu37, Gln78–Leu102, Tyr111–Leu131, Phe181–Ile202, and Leu216–Phe236. Residues Arg83 and Lys95 each contribute to the ADP site. Arg240 lines the ADP pocket. The tract at residues Arg240–Leu245 is important for transport activity. The Nucleotide carrier signature motif motif lies at Arg240–Leu245. A helical transmembrane segment spans residues Val276–Leu296.

Belongs to the mitochondrial carrier (TC 2.A.29) family.

The protein resides in the endoplasmic reticulum membrane. It catalyses the reaction ADP(in) + ATP(out) = ADP(out) + ATP(in). Functionally, ADP:ATP antiporter that catalyzes the exchange of ADP and ATP across the endoplasmic reticulum membrane. In Arabidopsis thaliana (Mouse-ear cress), this protein is ADP,ATP carrier protein ER-ANT1 (ER-ANT1).